Consider the following 243-residue polypeptide: DNA repair protein RecO (243 aa).

Belongs to the RecO family.

Functionally, involved in DNA repair and RecF pathway recombination. This is DNA repair protein RecO from Beutenbergia cavernae (strain ATCC BAA-8 / DSM 12333 / CCUG 43141 / JCM 11478 / NBRC 16432 / NCIMB 13614 / HKI 0122).